We begin with the raw amino-acid sequence, 383 residues long: ATP phosphoribosyltransferase regulatory subunit (383 aa).

The protein belongs to the class-II aminoacyl-tRNA synthetase family. HisZ subfamily. Heteromultimer composed of HisG and HisZ subunits.

Its subcellular location is the cytoplasm. It participates in amino-acid biosynthesis; L-histidine biosynthesis; L-histidine from 5-phospho-alpha-D-ribose 1-diphosphate: step 1/9. Required for the first step of histidine biosynthesis. May allow the feedback regulation of ATP phosphoribosyltransferase activity by histidine. The polypeptide is ATP phosphoribosyltransferase regulatory subunit (Cupriavidus pinatubonensis (strain JMP 134 / LMG 1197) (Cupriavidus necator (strain JMP 134))).